We begin with the raw amino-acid sequence, 380 residues long: Queuine tRNA-ribosyltransferase (380 aa).

Aspartate 96 serves as the catalytic Proton acceptor. Residues 96 to 100, aspartate 150, glutamine 193, and glycine 220 each bind substrate; that span reads DSGGF. An RNA binding region spans residues 251–257; it reads GVGAPDS. Aspartate 270 (nucleophile) is an active-site residue. Residues 275–279 form an RNA binding; important for wobble base 34 recognition region; the sequence is TRIAR. Cysteine 308, cysteine 310, cysteine 313, and histidine 339 together coordinate Zn(2+).

This sequence belongs to the queuine tRNA-ribosyltransferase family. Homodimer. Within each dimer, one monomer is responsible for RNA recognition and catalysis, while the other monomer binds to the replacement base PreQ1. Zn(2+) is required as a cofactor.

The enzyme catalyses 7-aminomethyl-7-carbaguanine + guanosine(34) in tRNA = 7-aminomethyl-7-carbaguanosine(34) in tRNA + guanine. The protein operates within tRNA modification; tRNA-queuosine biosynthesis. Its function is as follows. Catalyzes the base-exchange of a guanine (G) residue with the queuine precursor 7-aminomethyl-7-deazaguanine (PreQ1) at position 34 (anticodon wobble position) in tRNAs with GU(N) anticodons (tRNA-Asp, -Asn, -His and -Tyr). Catalysis occurs through a double-displacement mechanism. The nucleophile active site attacks the C1' of nucleotide 34 to detach the guanine base from the RNA, forming a covalent enzyme-RNA intermediate. The proton acceptor active site deprotonates the incoming PreQ1, allowing a nucleophilic attack on the C1' of the ribose to form the product. After dissociation, two additional enzymatic reactions on the tRNA convert PreQ1 to queuine (Q), resulting in the hypermodified nucleoside queuosine (7-(((4,5-cis-dihydroxy-2-cyclopenten-1-yl)amino)methyl)-7-deazaguanosine). The protein is Queuine tRNA-ribosyltransferase of Streptococcus pyogenes serotype M49 (strain NZ131).